The primary structure comprises 143 residues: Small ribosomal subunit protein uS12 (143 aa).

At P62 the chain carries Hydroxyproline.

It belongs to the universal ribosomal protein uS12 family.

The polypeptide is Small ribosomal subunit protein uS12 (rps23) (Dictyostelium discoideum (Social amoeba)).